An 88-amino-acid chain; its full sequence is Phosphocarrier protein HPr (88 aa).

An HPr domain is found at 1 to 88 (MVVKTVRVLN…RLFQNKFEEE (88 aa)). H15 (pros-phosphohistidine intermediate) is an active-site residue. Phosphoserine; by HPrK/P is present on S46.

It belongs to the HPr family.

The protein localises to the cytoplasm. Phosphorylation on Ser-46 inhibits the phosphoryl transfer from enzyme I to HPr. Its function is as follows. General (non sugar-specific) component of the phosphoenolpyruvate-dependent sugar phosphotransferase system (sugar PTS). This major carbohydrate active-transport system catalyzes the phosphorylation of incoming sugar substrates concomitantly with their translocation across the cell membrane. The phosphoryl group from phosphoenolpyruvate (PEP) is transferred to the phosphoryl carrier protein HPr by enzyme I. Phospho-HPr then transfers it to the PTS EIIA domain. This Treponema pallidum (strain Nichols) protein is Phosphocarrier protein HPr (ptsH).